Consider the following 568-residue polypeptide: CTP synthase (568 aa).

The segment at methionine 1 to leucine 276 is amidoligase domain. Serine 18 contacts CTP. Serine 18 lines the UTP pocket. ATP contacts are provided by residues serine 19 to leucine 24 and aspartate 76. Mg(2+) is bound by residues aspartate 76 and glutamate 150. Residues aspartate 157–glutamate 159, lysine 197–glutamine 202, and lysine 233 each bind CTP. Residues lysine 197 to glutamine 202 and lysine 233 contribute to the UTP site. Residues arginine 301–alanine 550 enclose the Glutamine amidotransferase type-1 domain. Glycine 364 is an L-glutamine binding site. The active-site Nucleophile; for glutamine hydrolysis is cysteine 391. Residues leucine 392–glutamine 395, glutamate 415, and arginine 476 contribute to the L-glutamine site. Residues histidine 523 and glutamate 525 contribute to the active site.

It belongs to the CTP synthase family. Homotetramer.

It carries out the reaction UTP + L-glutamine + ATP + H2O = CTP + L-glutamate + ADP + phosphate + 2 H(+). The catalysed reaction is L-glutamine + H2O = L-glutamate + NH4(+). It catalyses the reaction UTP + NH4(+) + ATP = CTP + ADP + phosphate + 2 H(+). Its pathway is pyrimidine metabolism; CTP biosynthesis via de novo pathway; CTP from UDP: step 2/2. Allosterically activated by GTP, when glutamine is the substrate; GTP has no effect on the reaction when ammonia is the substrate. The allosteric effector GTP functions by stabilizing the protein conformation that binds the tetrahedral intermediate(s) formed during glutamine hydrolysis. Inhibited by the product CTP, via allosteric rather than competitive inhibition. Catalyzes the ATP-dependent amination of UTP to CTP with either L-glutamine or ammonia as the source of nitrogen. Regulates intracellular CTP levels through interactions with the four ribonucleotide triphosphates. The chain is CTP synthase from Saccharopolyspora erythraea (strain ATCC 11635 / DSM 40517 / JCM 4748 / NBRC 13426 / NCIMB 8594 / NRRL 2338).